The following is a 685-amino-acid chain: Translation initiation factor IF-2 (685 aa).

One can recognise a tr-type G domain in the interval 185–354 (KRPPVVTVMG…LLTAEMQELK (170 aa)). Residues 194-201 (GHVDHGKT) form a G1 region. 194-201 (GHVDHGKT) is a binding site for GTP. The interval 219-223 (GITQH) is G2. Residues 240 to 243 (DTPG) form a G3 region. Residues 240–244 (DTPGH) and 294–297 (NKMD) contribute to the GTP site. The G4 stretch occupies residues 294–297 (NKMD). The interval 330–332 (SAH) is G5.

Belongs to the TRAFAC class translation factor GTPase superfamily. Classic translation factor GTPase family. IF-2 subfamily.

Its subcellular location is the cytoplasm. One of the essential components for the initiation of protein synthesis. Protects formylmethionyl-tRNA from spontaneous hydrolysis and promotes its binding to the 30S ribosomal subunits. Also involved in the hydrolysis of GTP during the formation of the 70S ribosomal complex. The sequence is that of Translation initiation factor IF-2 from Clostridium tetani (strain Massachusetts / E88).